Here is a 433-residue protein sequence, read N- to C-terminus: Glutamate-1-semialdehyde 2,1-aminomutase (433 aa).

At K269 the chain carries N6-(pyridoxal phosphate)lysine.

It belongs to the class-III pyridoxal-phosphate-dependent aminotransferase family. HemL subfamily. Homodimer. Requires pyridoxal 5'-phosphate as cofactor.

It is found in the cytoplasm. It catalyses the reaction (S)-4-amino-5-oxopentanoate = 5-aminolevulinate. The protein operates within porphyrin-containing compound metabolism; protoporphyrin-IX biosynthesis; 5-aminolevulinate from L-glutamyl-tRNA(Glu): step 2/2. The sequence is that of Glutamate-1-semialdehyde 2,1-aminomutase from Francisella philomiragia subsp. philomiragia (strain ATCC 25017 / CCUG 19701 / FSC 153 / O#319-036).